Here is a 314-residue protein sequence, read N- to C-terminus: Glutamyl-Q tRNA(Asp) synthetase (314 aa).

L-glutamate contacts are provided by residues 14–18 and Glu-50; that span reads RFAPS. A 'HIGH' region motif is present at residues 17–27; it reads PSPTGPLHVGS. Zn(2+)-binding residues include Cys-106, Cys-108, Tyr-129, and Cys-133. L-glutamate is bound by residues Tyr-187 and Arg-205. The short motif at 243–247 is the 'KMSKS' region element; it reads KLSKR. Lys-246 is a binding site for ATP.

The protein belongs to the class-I aminoacyl-tRNA synthetase family. GluQ subfamily. It depends on Zn(2+) as a cofactor.

Catalyzes the tRNA-independent activation of glutamate in presence of ATP and the subsequent transfer of glutamate onto a tRNA(Asp). Glutamate is transferred on the 2-amino-5-(4,5-dihydroxy-2-cyclopenten-1-yl) moiety of the queuosine in the wobble position of the QUC anticodon. This is Glutamyl-Q tRNA(Asp) synthetase from Geobacter sulfurreducens (strain ATCC 51573 / DSM 12127 / PCA).